The following is a 592-amino-acid chain: Potassium-transporting ATPase potassium-binding subunit (592 aa).

The next 11 helical transmembrane spans lie at 7–27 (LQTV…GTFM), 71–91 (VLFN…QHLL), 136–156 (GLTV…IAVI), 179–199 (LYIL…QGVI), 287–307 (LEIL…GAMV), 314–334 (WTLL…LQGV), 411–431 (GLYT…LMIG), 449–469 (SVVT…IAMI), 473–493 (AVAA…YAFA), 515–535 (ILGA…VLAM), and 559–579 (FALW…FPAL).

Belongs to the KdpA family. The system is composed of three essential subunits: KdpA, KdpB and KdpC.

It is found in the cell inner membrane. Its function is as follows. Part of the high-affinity ATP-driven potassium transport (or Kdp) system, which catalyzes the hydrolysis of ATP coupled with the electrogenic transport of potassium into the cytoplasm. This subunit binds the periplasmic potassium ions and delivers the ions to the membrane domain of KdpB through an intramembrane tunnel. The chain is Potassium-transporting ATPase potassium-binding subunit from Geobacter sulfurreducens (strain ATCC 51573 / DSM 12127 / PCA).